The following is a 199-amino-acid chain: NAD(P)H dehydrogenase (quinone) (199 aa).

The 187-residue stretch at 4-190 (VLVLYYSAYG…AGARYQGKTI (187 aa)) folds into the Flavodoxin-like domain. FMN contacts are provided by residues 10 to 15 (SAYGHI) and 78 to 80 (TRF). Tyr12 lines the NAD(+) pocket. Trp98 serves as a coordination point for substrate. FMN is bound by residues 113–119 (STATQHG) and His134.

It belongs to the WrbA family. The cofactor is FMN.

The catalysed reaction is a quinone + NADH + H(+) = a quinol + NAD(+). It carries out the reaction a quinone + NADPH + H(+) = a quinol + NADP(+). This Rhodopseudomonas palustris (strain BisB5) protein is NAD(P)H dehydrogenase (quinone).